Reading from the N-terminus, the 437-residue chain is Sodium/bile acid cotransporter 4 (437 aa).

The Extracellular segment spans residues 1 to 103; sequence MDSLDNTTLL…PPFWDTPLNH (103 aa). N-linked (GlcNAc...) asparagine glycans are attached at residues Asn-6 and Asn-20. The segment at 15–79 is disordered; sequence SLLPDNLTLS…SSSLTVGVAG (65 aa). A compositionally biased stretch (polar residues) spans 22–41; the sequence is TLSPNAGSPSASTLSPLAVT. Residues 42–74 show a composition bias toward low complexity; that stretch reads SSPGPGLSLAPSPSIGFSPEATPTPEPTSSSLT. The helical transmembrane segment at 104-124 threads the bilayer; sequence GLNVFVGAALCITMLGLGCTV. Topologically, residues 125–140 are cytoplasmic; sequence DVNHFGAHVRRPVGAL. A helical membrane pass occupies residues 141-161; it reads LAALCQFGFLPLLAFLLALIF. The Extracellular segment spans residues 162 to 197; the sequence is KLDEVAAVAVLLCGCCPGGNLSNLMSLLVDGDMNLS. N-linked (GlcNAc...) asparagine glycans are attached at residues Asn-181 and Asn-195. A helical membrane pass occupies residues 198–218; that stretch reads IIMTISSTLLALVLMPLCLWI. The Cytoplasmic portion of the chain corresponds to 219 to 233; the sequence is YSRAWINTPLVQLLP. The helical transmembrane segment at 234 to 254 threads the bilayer; the sequence is LGAVTLTLCSTLIPIGLGVFI. The Extracellular segment spans residues 255 to 267; sequence RYKYNRVADYIVK. The chain crosses the membrane as a helical span at residues 268–288; it reads VSLWSLLVTLVVLFIMTGTML. Over 289-291 the chain is Cytoplasmic; sequence GPE. A helical membrane pass occupies residues 292–312; it reads LLASIPATVYVVAIFMPLAGY. The Extracellular portion of the chain corresponds to 313 to 360; sequence ASGYGLATLFHLPPNCKRTVCLETGSQNVQLCTAILKLAFPPRFIGSM. The helical transmembrane segment at 361–381 threads the bilayer; sequence YMFPLLYALFQSAEAGVFVLI. Topologically, residues 382 to 437 are cytoplasmic; it reads YKMYGSEILHKREALDEDEDTDISYKKLKEEEMADTSYGTVGTDDLVMMETTQTAL.

It belongs to the bile acid:sodium symporter (BASS) (TC 2.A.28) family. Post-translationally, activated following N-terminal proteolytic cleavage by thrombin and/or proteases. Highest expression in the brain and significantly above background levels in the eye, prostate, and whole embryo tissue preparations.

The protein resides in the cell membrane. Its function is as follows. Transporter for bile acids. This is Sodium/bile acid cotransporter 4 (Slc10a4) from Mus musculus (Mouse).